The primary structure comprises 110 residues: Large ribosomal subunit protein uL24 (110 aa).

Belongs to the universal ribosomal protein uL24 family. As to quaternary structure, part of the 50S ribosomal subunit.

One of two assembly initiator proteins, it binds directly to the 5'-end of the 23S rRNA, where it nucleates assembly of the 50S subunit. In terms of biological role, one of the proteins that surrounds the polypeptide exit tunnel on the outside of the subunit. The polypeptide is Large ribosomal subunit protein uL24 (Thermus thermophilus (strain ATCC BAA-163 / DSM 7039 / HB27)).